The sequence spans 298 residues: Elongation factor Ts (298 aa).

An involved in Mg(2+) ion dislocation from EF-Tu region spans residues 79–82 (TDFV).

It belongs to the EF-Ts family.

The protein localises to the cytoplasm. Associates with the EF-Tu.GDP complex and induces the exchange of GDP to GTP. It remains bound to the aminoacyl-tRNA.EF-Tu.GTP complex up to the GTP hydrolysis stage on the ribosome. The sequence is that of Elongation factor Ts (tsf) from Mycoplasma pneumoniae (strain ATCC 29342 / M129 / Subtype 1) (Mycoplasmoides pneumoniae).